A 439-amino-acid polypeptide reads, in one-letter code: Adenylosuccinate synthetase (439 aa).

GTP-binding positions include 13 to 19 (GDEGKGK) and 41 to 43 (GHT). The active-site Proton acceptor is Asp-14. Residues Asp-14 and Gly-41 each contribute to the Mg(2+) site. IMP-binding positions include 14-17 (DEGK), 39-42 (NAGH), Thr-130, Arg-144, Gln-226, Thr-241, and Arg-313. The active-site Proton donor is His-42. 309–315 (ASTGRQR) is a substrate binding site. GTP contacts are provided by residues Arg-315, 341–343 (KLD), and 422–424 (STG).

This sequence belongs to the adenylosuccinate synthetase family. As to quaternary structure, homodimer. It depends on Mg(2+) as a cofactor.

It localises to the cytoplasm. It catalyses the reaction IMP + L-aspartate + GTP = N(6)-(1,2-dicarboxyethyl)-AMP + GDP + phosphate + 2 H(+). Its pathway is purine metabolism; AMP biosynthesis via de novo pathway; AMP from IMP: step 1/2. Its function is as follows. Plays an important role in the de novo pathway of purine nucleotide biosynthesis. Catalyzes the first committed step in the biosynthesis of AMP from IMP. In Acinetobacter baylyi (strain ATCC 33305 / BD413 / ADP1), this protein is Adenylosuccinate synthetase.